Reading from the N-terminus, the 91-residue chain is Large ribosomal subunit protein eL37B (91 aa).

Residues Cys19, Cys22, Cys34, and Cys37 each coordinate Zn(2+). The C4-type zinc finger occupies 19 to 37 (CRRCGKRSFHIQKSTCACC).

This sequence belongs to the eukaryotic ribosomal protein eL37 family. In terms of assembly, component of the large ribosomal subunit (LSU). Mature yeast ribosomes consist of a small (40S) and a large (60S) subunit. The 40S small subunit contains 1 molecule of ribosomal RNA (18S rRNA) and at least 33 different proteins. The large 60S subunit contains 3 rRNA molecules (25S, 5.8S and 5S rRNA) and at least 46 different proteins. Zn(2+) serves as cofactor.

The protein resides in the cytoplasm. Component of the ribosome, a large ribonucleoprotein complex responsible for the synthesis of proteins in the cell. The small ribosomal subunit (SSU) binds messenger RNAs (mRNAs) and translates the encoded message by selecting cognate aminoacyl-transfer RNA (tRNA) molecules. The large subunit (LSU) contains the ribosomal catalytic site termed the peptidyl transferase center (PTC), which catalyzes the formation of peptide bonds, thereby polymerizing the amino acids delivered by tRNAs into a polypeptide chain. The nascent polypeptides leave the ribosome through a tunnel in the LSU and interact with protein factors that function in enzymatic processing, targeting, and the membrane insertion of nascent chains at the exit of the ribosomal tunnel. This chain is Large ribosomal subunit protein eL37B (rpl3702), found in Schizosaccharomyces pombe (strain 972 / ATCC 24843) (Fission yeast).